Reading from the N-terminus, the 92-residue chain is VDCGQVNSSLASCIPFLTGGVASPSASCCAGVQNLKTLAPTSADRRAACECIKAAAARFPTIKQDAASSLPKKCGVDINIPISKTTNCQAIN.

4 cysteine pairs are disulfide-bonded: Cys3/Cys51, Cys13/Cys28, Cys29/Cys74, and Cys49/Cys88.

This sequence belongs to the plant LTP family.

Functionally, plant non-specific lipid-transfer proteins transfer phospholipids as well as galactolipids across membranes. May play a role in wax or cutin deposition in the cell walls of expanding epidermal cells and certain secretory tissues. The protein is Non-specific lipid-transfer protein A of Ricinus communis (Castor bean).